The primary structure comprises 70 residues: Large ribosomal subunit protein bL31 (70 aa).

K8 is modified (N6-acetyllysine). Positions 16, 18, 37, and 40 each coordinate Zn(2+).

Belongs to the bacterial ribosomal protein bL31 family. Type A subfamily. Part of the 50S ribosomal subunit. Zn(2+) is required as a cofactor.

Its function is as follows. Binds the 23S rRNA. The sequence is that of Large ribosomal subunit protein bL31 from Shigella flexneri.